Here is a 31-residue protein sequence, read N- to C-terminus: MLTITSYFGFLLAALTLTLALFIGLNKIRLI.

A helical membrane pass occupies residues 4 to 24 (ITSYFGFLLAALTLTLALFIG).

The protein belongs to the PetL family. In terms of assembly, the 4 large subunits of the cytochrome b6-f complex are cytochrome b6, subunit IV (17 kDa polypeptide, PetD), cytochrome f and the Rieske protein, while the 4 small subunits are PetG, PetL, PetM and PetN. The complex functions as a dimer.

It is found in the plastid. The protein resides in the chloroplast thylakoid membrane. In terms of biological role, component of the cytochrome b6-f complex, which mediates electron transfer between photosystem II (PSII) and photosystem I (PSI), cyclic electron flow around PSI, and state transitions. PetL is important for photoautotrophic growth as well as for electron transfer efficiency and stability of the cytochrome b6-f complex. The polypeptide is Cytochrome b6-f complex subunit 6 (Oryza sativa subsp. japonica (Rice)).